A 262-amino-acid chain; its full sequence is Zinc-finger homeodomain protein 6 (262 aa).

2 stretches are compositionally biased toward basic and acidic residues: residues 1 to 25 and 36 to 47; these read MEVR…DHHR and NKEKPTTKRNGS. Residues 1-93 are disordered; the sequence is MEVREKKDEK…ECQKNHAASS (93 aa). The ZF-HD dimerization-type; degenerate zinc-finger motif lies at 82–131; it reads YRECQKNHAASSGGHVVDGCGEFMSSGEEGTVESLLCAACDCHRSFHRKE. The segment at residues 198-261 is a DNA-binding region (homeobox); sequence KKRFRTKFNE…NNKQAAKKKD (64 aa).

Homo- and heterodimer with other ZFHD proteins. Interacts with MIF1 and MIF3; these interactions prevent nuclear localization and DNA-binding to inhibit transcription regulation activity. Binds to ZHD1, ZHD2, ZHD10 and ZHD11. In terms of tissue distribution, expressed in seedlings, roots, leaves, stems, flowers and inflorescence.

Its subcellular location is the nucleus. In terms of biological role, putative transcription factor. The chain is Zinc-finger homeodomain protein 6 (ZHD6) from Arabidopsis thaliana (Mouse-ear cress).